We begin with the raw amino-acid sequence, 295 residues long: Protoheme IX farnesyltransferase (295 aa).

A run of 9 helical transmembrane segments spans residues 30–50 (LVVL…HPLI), 51–71 (AVIS…INMW), 93–115 (ISRS…IMMI), 119–136 (YISG…IYVY), 148–168 (IVIG…SVTG), 175–195 (LVLF…LSLL), 219–239 (IHIL…GLFL), 244–264 (LYEI…FQVF), and 275–295 (MFTY…LSSF).

This sequence belongs to the UbiA prenyltransferase family. Protoheme IX farnesyltransferase subfamily.

The protein resides in the cell inner membrane. The catalysed reaction is heme b + (2E,6E)-farnesyl diphosphate + H2O = Fe(II)-heme o + diphosphate. The protein operates within porphyrin-containing compound metabolism; heme O biosynthesis; heme O from protoheme: step 1/1. Functionally, converts heme B (protoheme IX) to heme O by substitution of the vinyl group on carbon 2 of heme B porphyrin ring with a hydroxyethyl farnesyl side group. In Ehrlichia ruminantium (strain Welgevonden), this protein is Protoheme IX farnesyltransferase.